A 190-amino-acid chain; its full sequence is Inosine triphosphate pyrophosphatase (190 aa).

8-13 contributes to the ITP binding site; sequence TGNANK. Glu37 contributes to the Mg(2+) binding site. ITP-binding positions include Lys49, 65-66, Lys82, 140-143, Lys163, and 168-169; these read DT, FGWD, and HR.

It belongs to the HAM1 NTPase family. Homodimer. Mg(2+) serves as cofactor. Requires Mn(2+) as cofactor.

The protein localises to the cytoplasm. The protein resides in the nucleus. The catalysed reaction is ITP + H2O = IMP + diphosphate + H(+). It catalyses the reaction dITP + H2O = dIMP + diphosphate + H(+). The enzyme catalyses XTP + H2O = XMP + diphosphate + H(+). Functionally, pyrophosphatase that hydrolyzes non-canonical purine nucleotides such as inosine triphosphate (ITP), deoxyinosine triphosphate (dITP) or xanthosine 5'-triphosphate (XTP) to their respective monophosphate derivatives. The enzyme does not distinguish between the deoxy- and ribose forms. Probably excludes non-canonical purines from RNA and DNA precursor pools, thus preventing their incorporation into RNA and DNA and avoiding chromosomal lesions. The sequence is that of Inosine triphosphate pyrophosphatase from Batrachochytrium dendrobatidis (strain JAM81 / FGSC 10211) (Frog chytrid fungus).